The sequence spans 466 residues: Delta-1 crystallin (466 aa).

Position 2 is a blocked amino end (Ala) (Ala-2).

It belongs to the lyase 1 family. Argininosuccinate lyase subfamily. As to quaternary structure, homotetramer. Post-translationally, the N-terminus is blocked. Eye lens.

In terms of biological role, delta crystallin, the principal crystallin in embryonic lens, is found only in birds and reptiles. The polypeptide is Delta-1 crystallin (ASL1) (Gallus gallus (Chicken)).